The chain runs to 689 residues: DNA ligase (689 aa).

Residues D40 to D44, S89 to L90, and E121 each bind NAD(+). The active-site N6-AMP-lysine intermediate is K123. The NAD(+) site is built by R144, E179, K295, and K319. Residues C413, C416, C431, and C437 each contribute to the Zn(2+) site. The 80-residue stretch at R610–A689 folds into the BRCT domain.

It belongs to the NAD-dependent DNA ligase family. LigA subfamily. The cofactor is Mg(2+). It depends on Mn(2+) as a cofactor.

It carries out the reaction NAD(+) + (deoxyribonucleotide)n-3'-hydroxyl + 5'-phospho-(deoxyribonucleotide)m = (deoxyribonucleotide)n+m + AMP + beta-nicotinamide D-nucleotide.. Its function is as follows. DNA ligase that catalyzes the formation of phosphodiester linkages between 5'-phosphoryl and 3'-hydroxyl groups in double-stranded DNA using NAD as a coenzyme and as the energy source for the reaction. It is essential for DNA replication and repair of damaged DNA. This Rickettsia prowazekii (strain Madrid E) protein is DNA ligase.